The following is a 278-amino-acid chain: Protein irg-2 (278 aa).

The disordered stretch occupies residues 152 to 179 (NSIRGQPFKSLQPENRTPTQVTGHQQES). A compositionally biased stretch (polar residues) spans 163–179 (QPENRTPTQVTGHQQES).

Plays a role in innate immunity by conferring resistance to virulent strains of the Gram-negative bacterium P.aeruginosa via the zip-2 pathway and independent of the pmk-1 p38MAPK pathway. Induced as part of several immune responses to translational inhibition arising from endocytosis of ToxA during P.aeruginosa infection or exposure to exogenous cycloheximide. This Caenorhabditis elegans protein is Protein irg-2.